The chain runs to 272 residues: Putative phosphoenolpyruvate synthase regulatory protein (272 aa).

152–159 (GVSRSGKT) is an ADP binding site.

The protein belongs to the pyruvate, phosphate/water dikinase regulatory protein family. PSRP subfamily.

The catalysed reaction is [pyruvate, water dikinase] + ADP = [pyruvate, water dikinase]-phosphate + AMP + H(+). It catalyses the reaction [pyruvate, water dikinase]-phosphate + phosphate + H(+) = [pyruvate, water dikinase] + diphosphate. In terms of biological role, bifunctional serine/threonine kinase and phosphorylase involved in the regulation of the phosphoenolpyruvate synthase (PEPS) by catalyzing its phosphorylation/dephosphorylation. In Alcanivorax borkumensis (strain ATCC 700651 / DSM 11573 / NCIMB 13689 / SK2), this protein is Putative phosphoenolpyruvate synthase regulatory protein.